Here is an 876-residue protein sequence, read N- to C-terminus: Valine--tRNA ligase (876 aa).

A 'HIGH' region motif is present at residues 43–53; the sequence is PNVTGVLHMGH. Positions 532-536 match the 'KMSKS' region motif; the sequence is KMSKS. Lys535 contacts ATP. Coiled-coil stretches lie at residues 805–826 and 853–875; these read GNMIDVDAEIARMEAELKHKEG and RKKQADAESIIQSLKESIASLKN.

Belongs to the class-I aminoacyl-tRNA synthetase family. ValS type 1 subfamily. In terms of assembly, monomer.

It is found in the cytoplasm. It carries out the reaction tRNA(Val) + L-valine + ATP = L-valyl-tRNA(Val) + AMP + diphosphate. In terms of biological role, catalyzes the attachment of valine to tRNA(Val). As ValRS can inadvertently accommodate and process structurally similar amino acids such as threonine, to avoid such errors, it has a 'posttransfer' editing activity that hydrolyzes mischarged Thr-tRNA(Val) in a tRNA-dependent manner. The protein is Valine--tRNA ligase of Bacteroides fragilis (strain ATCC 25285 / DSM 2151 / CCUG 4856 / JCM 11019 / LMG 10263 / NCTC 9343 / Onslow / VPI 2553 / EN-2).